A 315-amino-acid polypeptide reads, in one-letter code: BTB/POZ domain-containing adapter for CUL3-mediated RhoA degradation protein 3 (315 aa).

At M1 the chain carries N-acetylmethionine. Phosphoserine is present on S23. The BTB domain maps to 32–100 (KYVKLNVGGA…LRDGGVPLPE (69 aa)). The PCNA-binding signature appears at 239–245 (QTKVEFP). A disordered region spans residues 269–294 (NALLEATGGAAGRSHHLDEDEERERE).

This sequence belongs to the BACURD family. As to quaternary structure, homotetramer; forms a two-fold symmetric tetramer in solution. Interacts with CUL3; interaction is direct and forms a 5:5 heterodecamer. Component of the BCR(BACURD3) E3 ubiquitin ligase complex, at least composed of CUL3, KCTD10/BACURD3 and RBX1. Interacts with DNA polymerase delta subunit 2/POLD2. Interacts with PCNA. Associated with the tectonic-like complex (also named B9 complex); however as Kctd10 has not been identified in all tectonic-like complexes purifications it is unclear whether it is really part of the complex.

The protein resides in the nucleus. It functions in the pathway protein modification; protein ubiquitination. Its function is as follows. Substrate-specific adapter of a BCR (BTB-CUL3-RBX1) E3 ubiquitin-protein ligase complex. The BCR(BACURD3) E3 ubiquitin ligase complex mediates the ubiquitination of target proteins, leading to their degradation by the proteasome. This is BTB/POZ domain-containing adapter for CUL3-mediated RhoA degradation protein 3 (Kctd10) from Mus musculus (Mouse).